The chain runs to 357 residues: Dihydroorotate dehydrogenase (quinone) (357 aa).

FMN is bound by residues 65-69 (AGLDK) and Thr89. Lys69 is a binding site for substrate. 114–118 (NRFGF) contributes to the substrate binding site. 2 residues coordinate FMN: Asn156 and Asn189. Asn189 serves as a coordination point for substrate. The active-site Nucleophile is the Ser192. Asn194 is a substrate binding site. FMN is bound by residues Lys234 and Thr262. Position 263–264 (263–264 (NT)) interacts with substrate. FMN-binding positions include Gly285, Gly314, and 335-336 (YT).

It belongs to the dihydroorotate dehydrogenase family. Type 2 subfamily. As to quaternary structure, monomer. Requires FMN as cofactor.

It localises to the cell membrane. The catalysed reaction is (S)-dihydroorotate + a quinone = orotate + a quinol. Its pathway is pyrimidine metabolism; UMP biosynthesis via de novo pathway; orotate from (S)-dihydroorotate (quinone route): step 1/1. Its function is as follows. Catalyzes the conversion of dihydroorotate to orotate with quinone as electron acceptor. The polypeptide is Dihydroorotate dehydrogenase (quinone) (Albidiferax ferrireducens (strain ATCC BAA-621 / DSM 15236 / T118) (Rhodoferax ferrireducens)).